Reading from the N-terminus, the 651-residue chain is MSEVHVHRVQPAWKKNALIDNDTYLKWYADSIKNPDKFWGKHGKRIDWFKPFSKVKNTSFDGKVSIKWFEDGLTNVSYNCIDRHLKKRGDQTAIIWEGDNPYDDKKITYNELYERVCRLANVMKKHGVKKGDRVTIYMPMIPEAAYAMLACTRIGAIHSIVFGGFSPDALAGRIVDCESTFVITADEGLRGGKSIPLKENTDKAIDIAAKNFVMVKNVLVVRRTGGKVGWAPGRDLWYHDEVATVKAECKPEKMKAEDPLFILYTSGSTGKPKGVLHTTAGYLVYASMTHQYVFDYHDGDIYWCTADVGWVTGHSYIVYGPLANGATTLMFEGVPNYPSQSRFWEVIDKHKVNIFYTAPTALRALMGAGNDPVKKTSRKSLRVLGSVGEPINPEAWEWYFNVVGNGKVPIVDTWWQTETGGILITPLPGATDLKAGSATRPFFGVKPQLVDGEGKVLEGAADGNLCITDSWPGQMRTVYGDHDRFVQTYFSTYKGKYFTGDGCRRDADGYYWITGRVDDVINVSGHRMGTAEVESALVSHDKVSEAAVVGYPHDIKGQGIYSYVTLMKGEEPTEDLRKELIAHVRKEIGAIASPDKIQFAPGLPKTRSGKIMRRILRKIAEDDFSTLGDTSTLADPAVVDDLIANRQNKKG.

CoA-binding positions include 190–193 (RGGK), T312, and N336. ATP is bound by residues 388–390 (GEP), 412–417 (DTWWQT), D501, and R516. S524 contributes to the CoA binding site. R527 provides a ligand contact to ATP. V538, H540, and V543 together coordinate Mg(2+). R585 serves as a coordination point for CoA. N6-acetyllysine is present on K610.

This sequence belongs to the ATP-dependent AMP-binding enzyme family. Mg(2+) serves as cofactor. Post-translationally, acetylated. Deacetylation by the SIR2-homolog deacetylase activates the enzyme.

It carries out the reaction acetate + ATP + CoA = acetyl-CoA + AMP + diphosphate. Catalyzes the conversion of acetate into acetyl-CoA (AcCoA), an essential intermediate at the junction of anabolic and catabolic pathways. AcsA undergoes a two-step reaction. In the first half reaction, AcsA combines acetate with ATP to form acetyl-adenylate (AcAMP) intermediate. In the second half reaction, it can then transfer the acetyl group from AcAMP to the sulfhydryl group of CoA, forming the product AcCoA. The protein is Acetyl-coenzyme A synthetase of Mesorhizobium japonicum (strain LMG 29417 / CECT 9101 / MAFF 303099) (Mesorhizobium loti (strain MAFF 303099)).